The following is a 937-amino-acid chain: Glycine dehydrogenase (decarboxylating) (937 aa).

Residue lysine 686 is modified to N6-(pyridoxal phosphate)lysine.

Belongs to the GcvP family. As to quaternary structure, the glycine cleavage system is composed of four proteins: P, T, L and H. The cofactor is pyridoxal 5'-phosphate.

The enzyme catalyses N(6)-[(R)-lipoyl]-L-lysyl-[glycine-cleavage complex H protein] + glycine + H(+) = N(6)-[(R)-S(8)-aminomethyldihydrolipoyl]-L-lysyl-[glycine-cleavage complex H protein] + CO2. In terms of biological role, the glycine cleavage system catalyzes the degradation of glycine. The P protein binds the alpha-amino group of glycine through its pyridoxal phosphate cofactor; CO(2) is released and the remaining methylamine moiety is then transferred to the lipoamide cofactor of the H protein. The chain is Glycine dehydrogenase (decarboxylating) from Mesorhizobium japonicum (strain LMG 29417 / CECT 9101 / MAFF 303099) (Mesorhizobium loti (strain MAFF 303099)).